The primary structure comprises 494 residues: UPF0371 protein M6_Spy1067 (494 aa).

Belongs to the UPF0371 family.

The chain is UPF0371 protein M6_Spy1067 from Streptococcus pyogenes serotype M6 (strain ATCC BAA-946 / MGAS10394).